Consider the following 38-residue polypeptide: MKVMASVKRICRNCKIIKRKGVVRVICSSDPRHKQRQG.

The protein belongs to the bacterial ribosomal protein bL36 family.

This is Large ribosomal subunit protein bL36 from Paraburkholderia phymatum (strain DSM 17167 / CIP 108236 / LMG 21445 / STM815) (Burkholderia phymatum).